The chain runs to 523 residues: Inosine-5'-monophosphate dehydrogenase 2 (523 aa).

CBS domains follow at residues 121–183 (FINN…VQDV) and 184–240 (MTKN…PLAS). NAD(+) contacts are provided by residues 278–280 (DSS) and 328–330 (GMG). Gly-330 and Gly-332 together coordinate K(+). Ser-333 is a binding site for IMP. Position 335 (Cys-335) interacts with K(+). Cys-335 functions as the Thioimidate intermediate in the catalytic mechanism. Residues 368–370 (DGG), 391–392 (GG), and 415–419 (YRGMG) each bind IMP. Arg-437 acts as the Proton acceptor in catalysis. Gln-449 is an IMP binding site. Residues Glu-508, Gly-509, and Gly-510 each coordinate K(+).

It belongs to the IMPDH/GMPR family. Homotetramer. Seems to be able to form heterotetramers composed from more than 1 of the 3 IMPDH gene products (IMD2-4). K(+) serves as cofactor.

It is found in the cytoplasm. It catalyses the reaction IMP + NAD(+) + H2O = XMP + NADH + H(+). The protein operates within purine metabolism; XMP biosynthesis via de novo pathway; XMP from IMP: step 1/1. With respect to regulation, mycophenolic acid (MPA) is a non-competitive inhibitor that prevents formation of the closed enzyme conformation by binding to the same site as the amobile flap. In contrast, mizoribine monophosphate (MZP) is a competitive inhibitor that induces the closed conformation. MPA is a potent inhibitor of mammalian IMPDHs but a poor inhibitor of the bacterial enzymes. MZP is a more potent inhibitor of bacterial IMPDH. Catalyzes the conversion of inosine 5'-phosphate (IMP) to xanthosine 5'-phosphate (XMP), the first committed and rate-limiting step in the de novo synthesis of guanine nucleotides, and therefore plays an important role in the regulation of cell growth. In contrast to the other IMPDH alleles IMD3 and IMD4, the enzymatic activity of IMD2 seems to be intrinsically drug resistant. In Saccharomyces cerevisiae (strain ATCC 204508 / S288c) (Baker's yeast), this protein is Inosine-5'-monophosphate dehydrogenase 2.